The primary structure comprises 441 residues: Amino-acid acetyltransferase (441 aa).

An N-acetyltransferase domain is found at 295 to 434 (EQVRRATIND…QALYNYQRRS (140 aa)).

It belongs to the acetyltransferase family. ArgA subfamily. Homohexamer.

Its subcellular location is the cytoplasm. The enzyme catalyses L-glutamate + acetyl-CoA = N-acetyl-L-glutamate + CoA + H(+). It participates in amino-acid biosynthesis; L-arginine biosynthesis; N(2)-acetyl-L-ornithine from L-glutamate: step 1/4. The chain is Amino-acid acetyltransferase from Pectobacterium atrosepticum (strain SCRI 1043 / ATCC BAA-672) (Erwinia carotovora subsp. atroseptica).